We begin with the raw amino-acid sequence, 634 residues long: Probable potassium transport system protein Kup 1 (634 aa).

A run of 12 helical transmembrane segments spans residues 20–40, 64–84, 110–130, 148–168, 176–196, 224–244, 256–276, 290–310, 348–368, 377–397, 405–425, and 430–450; these read FLTL…TSPL, VMSL…VLLI, FAAI…DAII, PVFD…LFVV, VAAW…LGGI, AGLL…ALYA, FAWF…QGAM, FLFP…ATII, IYIP…VFAF, AYGI…YFVM, VATS…FLMA, and IFEG…VMIT.

Belongs to the HAK/KUP transporter (TC 2.A.72) family.

It localises to the cell inner membrane. The catalysed reaction is K(+)(in) + H(+)(in) = K(+)(out) + H(+)(out). In terms of biological role, transport of potassium into the cell. Likely operates as a K(+):H(+) symporter. The protein is Probable potassium transport system protein Kup 1 of Rhodopseudomonas palustris (strain BisB5).